The following is a 177-amino-acid chain: Flavodoxin (177 aa).

One can recognise a Flavodoxin-like domain in the interval 4–173; that stretch reads IGIFFGSDTG…RIDTWLDKLK (170 aa).

Belongs to the flavodoxin family. Requires FMN as cofactor.

Functionally, low-potential electron donor to a number of redox enzymes. NifF is the electron donor to nitrogenase. The sequence is that of Flavodoxin (nifF) from Enterobacter agglomerans (Erwinia herbicola).